We begin with the raw amino-acid sequence, 1981 residues long: Nonribosomal peptide synthetase rstn8 (1981 aa).

The segment at 251–638 (SYAALEQESA…ELGEIEYQAS (388 aa)) is adenylation. One can recognise a Carrier 1 domain in the interval 763 to 840 (HHAGQKYDEM…ELFHRSQKTP (78 aa)). Position 800 is an O-(pantetheine 4'-phosphoryl)serine (serine 800). A condensation 1 region spans residues 883–1293 (EDIYPCSPLQ…DASMGTILSQ (411 aa)). The Carrier 2 domain occupies 1438–1514 (EPLLPLEATL…CLASTLNSRP (77 aa)). Serine 1475 carries the post-translational modification O-(pantetheine 4'-phosphoryl)serine. The tract at residues 1586–1978 (EEQIDLVSFA…TFAQSIERII (393 aa)) is condensation 1. The disordered stretch occupies residues 1754–1774 (HHHHQHEGRQHHGASETNGNR).

The protein belongs to the NRP synthetase family. Pantetheine 4'-phosphate is required as a cofactor.

The catalysed reaction is 2 L-tryptophan = cyclo(L-Trp-L-Trp) + 2 H2O. It participates in alkaloid biosynthesis. Functionally, nonribosomal peptide synthetase; part of the gene cluster that mediates the biosynthesis of okaramine B, a prenylated indole alkaloid that possesses an unusual octacyclic ring system, including a four-membered azetidine ring and an eight-membered azocine ring, and that exhibits insecticidal activity against silkworm larvae. Within the pathway, okaA acts as a bimodular non-ribosomal peptide synthetase (NRPS) that condenses two tryptophan molecules into cyclo(L-Trp-L-Trp). Prenylation by the prenyltransferase okaC then leads to the formation of cyclo(N8-(alpha,alpha-dimethylallyl)-L-Trp-6a-(alpha,alpha-dime-thylallyl)-L-Trp). This is followed by indole 2,3-epoxidation by the FAD-dependent monooxygenase okaB to facilitate the formation of the hexahydropyrrolo[2,3-b]indole (HPI) moiety of okaramine C. The cytochrome P450 monooxygenase okaD then likely catalyzes formation of the eight-membered ring of okaramine A. The dioxygenase okaE further forms the unusual 2-dimethyl-3-methyl-azetidine ring to yield 12-deshydroxyl okaramine E, as well as the hydroxylation of 12-deshydroxyl okaramine E to produce okaramine E. The cytochrome P450 monoxygenase okaG converts 12-deshydroxyl okaramine E into 3-desmethyl okaramine B which is further methylated by the methyltransferase okaF into okaramine B. In a shunt pathway, okaG and okaF together are also able to convert okaramine E into okaramine D. Okaramine H is produced by nonenzymatic conversion from okaramine A. This is Nonribosomal peptide synthetase rstn8 from Penicillium ochrochloron.